The following is a 41-amino-acid chain: Alpha-conotoxin CIB (41 aa).

A propeptide spanning residues 1–21 (SDGRNEAANDEASDVIELALK) is cleaved from the precursor. Intrachain disulfides connect C23-C29 and C24-C37. A ser-Xaa-Pro motif, crucial for potent interaction with nAChR region spans residues 25-27 (SNP). C37 carries the post-translational modification Cysteine amide.

Belongs to the conotoxin A superfamily. As to expression, expressed by the venom duct.

The protein resides in the secreted. Alpha-conotoxins act on postsynaptic membranes, they bind to the nicotinic acetylcholine receptors (nAChR) and thus inhibit them. This toxin blocks rat neuronal nAChR alpha-3-beta-2/CHRNA3-CHRNB2 (IC(50)=128.9 nM) and alpha-7/CHRNA7 (IC(50)=1511 nM). In vivo, intramuscular injection into zebrafish does not produce any effect on the locomotion of zebrafish. This chain is Alpha-conotoxin CIB, found in Conus catus (Cat cone).